Reading from the N-terminus, the 1275-residue chain is Serine/threonine-protein kinase ULK4 (1275 aa).

Positions 4–280 (FILYEEIGRG…WTRLLQHSFW (277 aa)) constitute a Protein kinase domain. Disordered regions lie at residues 299 to 350 (SRNT…KSTL) and 364 to 392 (RPTP…TSPL). Basic and acidic residues predominate over residues 336–348 (FRLENPTEFRPKS). A compositionally biased stretch (polar residues) spans 364 to 373 (RPTPRTSTAV). HEAT repeat units follow at residues 842-880 (LKLC…ILSH), 926-964 (STVV…LLVN), 1025-1063 (LVEE…NLVA), 1151-1189 (NRPL…LYGG), and 1213-1253 (PKEQ…LAPG).

Belongs to the protein kinase superfamily. Ser/Thr protein kinase family. APG1/unc-51/ULK1 subfamily. As to expression, expressed in the brain, mainly in postmitotic neurons, including GABAergic neurons, but not in astrocytes (at protein level).

The enzyme catalyses L-seryl-[protein] + ATP = O-phospho-L-seryl-[protein] + ADP + H(+). It catalyses the reaction L-threonyl-[protein] + ATP = O-phospho-L-threonyl-[protein] + ADP + H(+). In terms of biological role, may be involved in the remodeling of cytoskeletal components, such as alpha-tubulin, and in this way regulates neurite branching and elongation, as well as cell motility. The sequence is that of Serine/threonine-protein kinase ULK4 (ULK4) from Homo sapiens (Human).